The following is a 258-amino-acid chain: Phosphate import ATP-binding protein PstB (258 aa).

In terms of domain architecture, ABC transporter spans 5–247 (LDLKDVNIYY…EKIFSNPRQK (243 aa)). Residue 37-44 (GPSGCGKS) participates in ATP binding.

The protein belongs to the ABC transporter superfamily. Phosphate importer (TC 3.A.1.7) family. As to quaternary structure, the complex is composed of two ATP-binding proteins (PstB), two transmembrane proteins (PstC and PstA) and a solute-binding protein (PstS).

The protein resides in the cell membrane. It catalyses the reaction phosphate(out) + ATP + H2O = ADP + 2 phosphate(in) + H(+). Part of the ABC transporter complex PstSACB involved in phosphate import. Responsible for energy coupling to the transport system. This Mycolicibacterium smegmatis (Mycobacterium smegmatis) protein is Phosphate import ATP-binding protein PstB.